Reading from the N-terminus, the 233-residue chain is DNA repair protein RecO (233 aa).

Belongs to the RecO family.

Functionally, involved in DNA repair and RecF pathway recombination. This is DNA repair protein RecO from Pseudomonas aeruginosa (strain UCBPP-PA14).